We begin with the raw amino-acid sequence, 268 residues long: MSRYEKMFARLNEKNQGAFVPFVTVCDPNAEQSYKIMETLVESGADALELGIPFSDPLADGPTIQGANIRALDSGATPDICFEQIGKIRAKYPDLPIGLLMYANLVYSRGIESFYERCAKAGIDSVLIADVPTNESAEFVAAAEKFGIHPIFIAPPTASDETLKQVSELGGGYTYLLSRAGVTGAETKANMPVDHMLEKLNQFNAPPALLGFGISEPAQVKQAIEAGAAGAISGSAVVKIIEAHVEQPQIMLDKLGEFVSAMKAATQK.

Catalysis depends on proton acceptor residues Glu-49 and Asp-60.

This sequence belongs to the TrpA family. In terms of assembly, tetramer of two alpha and two beta chains.

It catalyses the reaction (1S,2R)-1-C-(indol-3-yl)glycerol 3-phosphate + L-serine = D-glyceraldehyde 3-phosphate + L-tryptophan + H2O. The protein operates within amino-acid biosynthesis; L-tryptophan biosynthesis; L-tryptophan from chorismate: step 5/5. The alpha subunit is responsible for the aldol cleavage of indoleglycerol phosphate to indole and glyceraldehyde 3-phosphate. The polypeptide is Tryptophan synthase alpha chain (Vibrio parahaemolyticus serotype O3:K6 (strain RIMD 2210633)).